Reading from the N-terminus, the 114-residue chain is Head formation protein (114 aa).

Over residues 1–14 (MNKDDLDLDLEIID) the composition is skewed to acidic residues. A disordered region spans residues 1 to 26 (MNKDDLDLDLEIIDESPSSEGEEERK).

Functionally, helps head vertex assembly. The sequence is that of Head formation protein (40) from Escherichia coli (Bacteriophage T4).